The primary structure comprises 1761 residues: Probable serine/threonine-protein kinase DDB_G0282963 (1761 aa).

Disordered regions lie at residues 18–47 (PQQQQIPQQQEQQQQQQQQQQQQQQQQQQQ), 60–269 (QQQQ…SNKL), 322–458 (SISN…SDFN), 545–717 (QNSS…KSSQ), 749–783 (LKNSPFPPSSPILSPQTDDPNNNNNNNNSNTTISQ), 798–830 (AFYNSGSNNNNNNNNNNNNNNNNNNNNTNSTSA), 842–956 (TTQI…KSVF), 972–997 (NSHHHHNSGNNSSNSNNNNNDDEVPT), 1081–1151 (ITSA…CNVN), 1179–1305 (KNNC…PSKQ), 1318–1343 (ALDSTNNNNNNNNDTDSTSSNMGTPT), and 1355–1459 (QHSR…ECWK). 4 stretches are compositionally biased toward low complexity: residues 19-47 (QQQQIPQQQEQQQQQQQQQQQQQQQQQQQ), 60-85 (QQQQEQQNNNNNINDNINGNNNSNEI), 92-105 (NITNNNGTSIIISL), and 112-237 (ALNS…NNNN). The segment covering 238–256 (KQMTPPTFKNNLQVKHQPQ) has biased composition (polar residues). 4 stretches are compositionally biased toward low complexity: residues 257–269 (SSSGGSIGGSNKL), 322–341 (SISNTTNETTTTTTTTTNTT), 348–451 (GSIG…NNGV), and 546–572 (NSSLNINNNNNSSNNNNINNNNNNNNI). Polar residues predominate over residues 573–582 (MAGSTSSVIY). The span at 591–627 (NENNNNNINNDNTVCNINNNNNSNNNKSNNSNNSNNS) shows a compositional bias: low complexity. The segment covering 633–643 (SSDEEPETDSD) has biased composition (acidic residues). 8 stretches are compositionally biased toward low complexity: residues 674–697 (NNTNTNTNTHNTYNNNKNNNNNNT), 759–778 (PILSPQTDDPNNNNNNNNSN), 805–824 (NNNNNNNNNNNNNNNNNNNN), 847–885 (TSDIDTSNSDNNNNNNNNNTSDNNFNDYNNDYNNDYNNY), 902–956 (TKMS…KSVF), 979–990 (SGNNSSNSNNNN), 1081–1149 (ITSA…CTCN), and 1180–1262 (NNCT…SNNN). The span at 1263–1273 (NHHHHHHHHHN) shows a compositional bias: basic residues. 4 stretches are compositionally biased toward low complexity: residues 1288 to 1303 (SSSSSPWSSPALSSPS), 1320 to 1338 (DSTNNNNNNNNDTDSTSSN), 1359 to 1386 (NNSSNNQNNNNINNNNNNNNNNNNNNNN), and 1393 to 1454 (SNST…MNSN). One can recognise a Protein kinase domain in the interval 1476–1744 (LFLIKKIGAG…AITSLYDDYI (269 aa)). Residues 1482 to 1490 (IGAGSFSKV) and Lys1503 contribute to the ATP site. The active-site Proton acceptor is the Asp1597.

It belongs to the protein kinase superfamily. TKL Ser/Thr protein kinase family.

It catalyses the reaction L-seryl-[protein] + ATP = O-phospho-L-seryl-[protein] + ADP + H(+). The catalysed reaction is L-threonyl-[protein] + ATP = O-phospho-L-threonyl-[protein] + ADP + H(+). This chain is Probable serine/threonine-protein kinase DDB_G0282963, found in Dictyostelium discoideum (Social amoeba).